Here is a 196-residue protein sequence, read N- to C-terminus: Nucleoside triphosphate pyrophosphatase (196 aa).

Aspartate 73 serves as the catalytic Proton acceptor.

The protein belongs to the Maf family. The cofactor is a divalent metal cation.

Its subcellular location is the cytoplasm. The catalysed reaction is a ribonucleoside 5'-triphosphate + H2O = a ribonucleoside 5'-phosphate + diphosphate + H(+). It carries out the reaction a 2'-deoxyribonucleoside 5'-triphosphate + H2O = a 2'-deoxyribonucleoside 5'-phosphate + diphosphate + H(+). Its function is as follows. Nucleoside triphosphate pyrophosphatase. May have a dual role in cell division arrest and in preventing the incorporation of modified nucleotides into cellular nucleic acids. This Maricaulis maris (strain MCS10) (Caulobacter maris) protein is Nucleoside triphosphate pyrophosphatase.